We begin with the raw amino-acid sequence, 197 residues long: dTTP/UTP pyrophosphatase (197 aa).

Aspartate 69 acts as the Proton acceptor in catalysis.

This sequence belongs to the Maf family. YhdE subfamily. A divalent metal cation serves as cofactor.

The protein localises to the cytoplasm. The enzyme catalyses dTTP + H2O = dTMP + diphosphate + H(+). It carries out the reaction UTP + H2O = UMP + diphosphate + H(+). In terms of biological role, nucleoside triphosphate pyrophosphatase that hydrolyzes dTTP and UTP. May have a dual role in cell division arrest and in preventing the incorporation of modified nucleotides into cellular nucleic acids. This chain is dTTP/UTP pyrophosphatase, found in Lachnoclostridium phytofermentans (strain ATCC 700394 / DSM 18823 / ISDg) (Clostridium phytofermentans).